The following is a 72-amino-acid chain: Probable protein E5B (72 aa).

In Homo sapiens (Human), this protein is Probable protein E5B.